A 356-amino-acid polypeptide reads, in one-letter code: uncharacterized protein (356 aa).

Helical transmembrane passes span 2-22 (IESI…FHRL), 35-55 (GYVT…PIPF), 76-96 (NMGY…FAFG), 99-119 (LLYG…GPFL), 124-144 (IVAL…LSIF), and 152-172 (EIAF…ITFV). The GGDEF domain occupies 218–353 (ESLALLLIDI…GRNQVMFNPI (136 aa)).

It localises to the cell membrane. This is an uncharacterized protein from Staphylococcus haemolyticus (strain JCSC1435).